We begin with the raw amino-acid sequence, 925 residues long: Bifunctional glutamine synthetase adenylyltransferase/adenylyl-removing enzyme (925 aa).

The tract at residues 1–426 is adenylyl removase; it reads MTDASDLLSL…AQFDQVFADK (426 aa). An adenylyl transferase region spans residues 436-925; the sequence is DQAAGCIWSG…AALWARVFGA (490 aa).

Belongs to the GlnE family. Mg(2+) is required as a cofactor.

It carries out the reaction [glutamine synthetase]-O(4)-(5'-adenylyl)-L-tyrosine + phosphate = [glutamine synthetase]-L-tyrosine + ADP. It catalyses the reaction [glutamine synthetase]-L-tyrosine + ATP = [glutamine synthetase]-O(4)-(5'-adenylyl)-L-tyrosine + diphosphate. Functionally, involved in the regulation of glutamine synthetase GlnA, a key enzyme in the process to assimilate ammonia. When cellular nitrogen levels are high, the C-terminal adenylyl transferase (AT) inactivates GlnA by covalent transfer of an adenylyl group from ATP to specific tyrosine residue of GlnA, thus reducing its activity. Conversely, when nitrogen levels are low, the N-terminal adenylyl removase (AR) activates GlnA by removing the adenylyl group by phosphorolysis, increasing its activity. The regulatory region of GlnE binds the signal transduction protein PII (GlnB) which indicates the nitrogen status of the cell. This chain is Bifunctional glutamine synthetase adenylyltransferase/adenylyl-removing enzyme, found in Burkholderia mallei (strain ATCC 23344).